Here is a 206-residue protein sequence, read N- to C-terminus: Protein GET1 (206 aa).

Residues 1 to 4 lie on the Lumenal side of the membrane; the sequence is MPSL. A helical membrane pass occupies residues 5–24; the sequence is LITVLFLNVIIYVVNTVGAA. The Cytoplasmic segment spans residues 25 to 110; sequence TVDGLLWLLY…TFDMTIKIAR (86 aa). Positions 75 to 100 form a coiled coil; that stretch reads AKLRRRHDKALEAYEAKNNELTQSKS. The chain crosses the membrane as a helical span at residues 111-131; that stretch reads WAATSGLMLFLQFWYSKTPIF. At 132–155 the chain is on the lumenal side; the sequence is TLPPGWIPWQVQWVLSFPRAPMGT. The chain crosses the membrane as a helical span at residues 156-172; sequence VSIQIWGGACATVVALV. The Cytoplasmic portion of the chain corresponds to 173–206; that stretch reads GDAMKASLAYVSKPKIDRIKLGATMEGKEGKKRQ.

The protein belongs to the WRB/GET1 family. As to quaternary structure, interacts with GET3.

The protein resides in the endoplasmic reticulum membrane. Its function is as follows. Required for the post-translational delivery of tail-anchored (TA) proteins to the endoplasmic reticulum. Acts as a membrane receptor for soluble GET3, which recognizes and selectively binds the transmembrane domain of TA proteins in the cytosol. In Ajellomyces capsulatus (strain G186AR / H82 / ATCC MYA-2454 / RMSCC 2432) (Darling's disease fungus), this protein is Protein GET1.